The chain runs to 635 residues: Paraneoplastic antigen-like protein 8B (635 aa).

Disordered regions lie at residues 115 to 202 (PTQA…DESL), 260 to 332 (TDKS…NPEF), and 492 to 635 (AARE…PKCR). A compositionally biased stretch (polar residues) spans 133 to 147 (SETQAQDSGEVTGQA). Over residues 156–183 (NPRRGRRGRRNRTRRNRLTQKGKKRSRG) the composition is skewed to basic residues. Over residues 261–273 (DKSKKEEAEKEPA) the composition is skewed to basic and acidic residues. Composition is skewed to acidic residues over residues 302–329 (PDEE…ELDN) and 502–524 (GSEE…EASE). A compositionally biased stretch (basic residues) spans 531–540 (RKPRAKRART). Residues 541–557 (APRGLTPAGAPPTASGA) show a composition bias toward low complexity. Basic residues-rich tracts occupy residues 558–568 (RKTRAGGRGRG) and 619–635 (ARGK…PKCR).

This sequence belongs to the PNMA family.

The polypeptide is Paraneoplastic antigen-like protein 8B (Homo sapiens (Human)).